The chain runs to 326 residues: B3 domain-containing protein At5g60130 (326 aa).

Positions 12 to 110 (PKFFKVYLPD…CFHFCIYEHR (99 aa)) form a DNA-binding region, TF-B3. Residues 124-222 (EEIKVESDSD…DEDERQYLDD (99 aa)) form a disordered region. A compositionally biased stretch (acidic residues) spans 143 to 199 (LSLDEDDDDSDYNCGEDNDSDDYADEAAVEKDDNDADDEDVDNVADDVPVEDDDYVE).

Its subcellular location is the nucleus. The chain is B3 domain-containing protein At5g60130 from Arabidopsis thaliana (Mouse-ear cress).